The primary structure comprises 334 residues: Aspartate carbamoyltransferase catalytic subunit (334 aa).

Carbamoyl phosphate-binding residues include Arg70 and Thr71. Residue Lys98 participates in L-aspartate binding. Arg120, His150, and Gln153 together coordinate carbamoyl phosphate. Residues Arg183 and Arg239 each contribute to the L-aspartate site. Positions 280 and 281 each coordinate carbamoyl phosphate.

It belongs to the aspartate/ornithine carbamoyltransferase superfamily. ATCase family. In terms of assembly, heterododecamer (2C3:3R2) of six catalytic PyrB chains organized as two trimers (C3), and six regulatory PyrI chains organized as three dimers (R2).

It catalyses the reaction carbamoyl phosphate + L-aspartate = N-carbamoyl-L-aspartate + phosphate + H(+). Its pathway is pyrimidine metabolism; UMP biosynthesis via de novo pathway; (S)-dihydroorotate from bicarbonate: step 2/3. Its function is as follows. Catalyzes the condensation of carbamoyl phosphate and aspartate to form carbamoyl aspartate and inorganic phosphate, the committed step in the de novo pyrimidine nucleotide biosynthesis pathway. The sequence is that of Aspartate carbamoyltransferase catalytic subunit from Pseudomonas paraeruginosa (strain DSM 24068 / PA7) (Pseudomonas aeruginosa (strain PA7)).